The primary structure comprises 149 residues: Calmodulin-1 (149 aa).

An N-acetylalanine modification is found at alanine 2. EF-hand domains follow at residues aspartate 8–asparagine 43, proline 44–aspartate 79, aspartate 81–lysine 116, and leucine 117–lysine 149. Ca(2+)-binding residues include aspartate 21, aspartate 23, aspartate 25, cysteine 27, glutamate 32, aspartate 57, aspartate 59, asparagine 61, threonine 63, glutamate 68, aspartate 94, aspartate 96, asparagine 98, and glutamate 105. N6,N6,N6-trimethyllysine is present on lysine 116. The Ca(2+) site is built by aspartate 130, aspartate 132, aspartate 134, glutamine 136, and glutamate 141.

This sequence belongs to the calmodulin family.

Functionally, calmodulin mediates the control of a large number of enzymes, ion channels and other proteins by Ca(2+). Among the enzymes to be stimulated by the calmodulin-Ca(2+) complex are a number of protein kinases and phosphatases. The chain is Calmodulin-1 (CAM1-1) from Oryza sativa subsp. indica (Rice).